The primary structure comprises 157 residues: Cell number regulator 10 (157 aa).

2 helical membrane-spanning segments follow: residues 41-57 (DCGLCCLTCWCPCITFG) and 66-83 (GATSCGTAGALYAVLAYF).

This sequence belongs to the cornifelin family. As to expression, expressed in roots, leaves, stalks, immature ears and silks.

It localises to the membrane. The protein is Cell number regulator 10 (CNR10) of Zea mays (Maize).